A 104-amino-acid polypeptide reads, in one-letter code: Replication restart protein PriB (104 aa).

The SSB domain occupies 1–101 (MTNRLELSGV…LHADHIEIIC (101 aa)).

It belongs to the PriB family. As to quaternary structure, homodimer. Interacts with PriA and DnaT. Component of the replication restart primosome. Primosome assembly occurs via a 'hand-off' mechanism. PriA binds to replication forks, subsequently PriB then DnaT bind; DnaT then displaces ssDNA to generate the helicase loading substrate.

In terms of biological role, involved in the restart of stalled replication forks, which reloads the replicative helicase on sites other than the origin of replication; the PriA-PriB pathway is the major replication restart pathway. During primosome assembly it facilitates complex formation between PriA and DnaT on DNA; stabilizes PriA on DNA. Stimulates the DNA unwinding activity of PriA helicase. In Photobacterium profundum (strain SS9), this protein is Replication restart protein PriB.